A 178-amino-acid polypeptide reads, in one-letter code: Large ribosomal subunit protein uL6 (178 aa).

The protein belongs to the universal ribosomal protein uL6 family. In terms of assembly, part of the 50S ribosomal subunit.

Functionally, this protein binds to the 23S rRNA, and is important in its secondary structure. It is located near the subunit interface in the base of the L7/L12 stalk, and near the tRNA binding site of the peptidyltransferase center. This Campylobacter jejuni subsp. jejuni serotype O:2 (strain ATCC 700819 / NCTC 11168) protein is Large ribosomal subunit protein uL6.